The primary structure comprises 1369 residues: Phospholipase D1 (1369 aa).

Disordered regions lie at residues 27–90 (YSEK…SSWH) and 318–340 (ESHSQDGDRTTGQPRHANNGRKK). Residues 31-53 (GTGRKDAEDHTPSKITDLEKNVD) are compositionally biased toward basic and acidic residues. Residues 208–379 (TDLIKVSVLD…NVLYSFLEFS (172 aa)) enclose the PX domain. PLD phosphodiesterase domains are found at residues 641-668 (LFWAHHEKLVVVDDAITFIGGIDLCFGR) and 941-968 (EMIYVHAKILIADDRVAVIGSANINERS). A compositionally biased stretch (basic and acidic residues) spans 1277–1289 (HETHEKSENDPKN). The disordered stretch occupies residues 1277–1320 (HETHEKSENDPKNPKAGSQGSGNTSASEDSKTEKPKTRTNNGLQ). The span at 1292 to 1303 (AGSQGSGNTSAS) shows a compositional bias: polar residues.

The protein belongs to the phospholipase D family.

Its subcellular location is the cytoplasm. It carries out the reaction a 1,2-diacyl-sn-glycero-3-phosphocholine + H2O = a 1,2-diacyl-sn-glycero-3-phosphate + choline + H(+). With respect to regulation, activity is slightly stimulated by oleate. Required for meiosis and spore formation. Seems to be involved in the coordinate induction of late meiotic events. In Schizosaccharomyces pombe (strain 972 / ATCC 24843) (Fission yeast), this protein is Phospholipase D1 (pld1).